We begin with the raw amino-acid sequence, 404 residues long: Chorismate synthase (404 aa).

Residues R43 and R49 each contribute to the NADP(+) site. FMN contacts are provided by residues 138–140 (RAS), 259–260 (QA), G303, 318–322 (KPIST), and R344.

This sequence belongs to the chorismate synthase family. Homotetramer. It depends on FMNH2 as a cofactor.

It carries out the reaction 5-O-(1-carboxyvinyl)-3-phosphoshikimate = chorismate + phosphate. It functions in the pathway metabolic intermediate biosynthesis; chorismate biosynthesis; chorismate from D-erythrose 4-phosphate and phosphoenolpyruvate: step 7/7. In terms of biological role, catalyzes the anti-1,4-elimination of the C-3 phosphate and the C-6 proR hydrogen from 5-enolpyruvylshikimate-3-phosphate (EPSP) to yield chorismate, which is the branch point compound that serves as the starting substrate for the three terminal pathways of aromatic amino acid biosynthesis. This reaction introduces a second double bond into the aromatic ring system. The protein is Chorismate synthase of Mycolicibacterium paratuberculosis (strain ATCC BAA-968 / K-10) (Mycobacterium paratuberculosis).